A 567-amino-acid chain; its full sequence is R-linalool synthase QH1, chloroplastic (567 aa).

Residues 1 to 24 (GNAYMRIYSTKTTRITANATVNAA) constitute a chloroplast transit peptide. The (2E)-geranyl diphosphate site is built by R282, D319, D323, R460, and D463. 2 residues coordinate Mg(2+): D319 and D323. Residues 319-323 (DDVYD) carry the DDXXD motif motif. The Mg(2+) site is built by D463, T467, and E471.

The protein belongs to the terpene synthase family. Tpsb subfamily. The cofactor is Mg(2+). Highly expressed in leaves and lower levels in inflorescences. Not detected in stems, stem epidermis, stem stele or roots.

It localises to the plastid. The protein resides in the chloroplast. It catalyses the reaction (2E)-geranyl diphosphate + H2O = (R)-linalool + diphosphate. The protein operates within secondary metabolite biosynthesis; terpenoid biosynthesis. Its function is as follows. Monoterpene synthase that catalyzes the formation of (3R)-linalool from geranyl diphosphate, but not from isopentenyl diphosphate, dimethylallyl diphosphate, chrysanthemyl diphosphate, farnesyl diphosphate, (+)-copalyl diphosphate or geranylgeranyl diphosphate. The polypeptide is R-linalool synthase QH1, chloroplastic (QH1) (Artemisia annua (Sweet wormwood)).